We begin with the raw amino-acid sequence, 106 residues long: Guanylate cyclase activator 2B (106 aa).

The N-terminal stretch at 1–21 (MSRSQLWAAVVLLLLLQSAQG) is a signal peptide. Residues 22 to 91 (VYIKYHGFQV…STFKALRTIA (70 aa)) constitute a propeptide that is removed on maturation. 3 disulfide bridges follow: Cys-62-Cys-75, Cys-95-Cys-103, and Cys-98-Cys-106.

This sequence belongs to the guanylin family. In terms of tissue distribution, localized predominantly in intestinal villi and the corticomedullary junction of the kidney.

Its subcellular location is the secreted. In terms of biological role, endogenous activator of intestinal guanylate cyclase. It stimulates this enzyme through the same receptor binding region as the heat-stable enterotoxins. May be a potent physiological regulator of intestinal fluid and electrolyte transport. May be an autocrine/paracrine regulator of intestinal salt and water transport. The protein is Guanylate cyclase activator 2B (Guca2b) of Mus musculus (Mouse).